Consider the following 296-residue polypeptide: Cell division protein DivIB (296 aa).

The Cytoplasmic portion of the chain corresponds to 1–25 (MMEDKIIHTPRFDEQRRMRRKKRQR). The chain crosses the membrane as a helical span at residues 26 to 46 (LQLFIFLSIVAIVSLILIYMF). At 47 to 296 (TSISYVKKIS…KELNQVKKNS (250 aa)) the chain is on the extracellular side. Residues 50–118 (SYVKKISVND…NTVSINVEEY (69 aa)) form the POTRA domain.

This sequence belongs to the FtsQ/DivIB family. DivIB subfamily.

The protein localises to the cell membrane. In terms of biological role, cell division protein that may be involved in stabilizing or promoting the assembly of the division complex. The polypeptide is Cell division protein DivIB (Macrococcus caseolyticus (strain JCSC5402) (Macrococcoides caseolyticum)).